The primary structure comprises 337 residues: Ferredoxin--NADP reductase (337 aa).

Residues E42, Q50, Y55, V97, F130, D292, and T333 each coordinate FAD.

This sequence belongs to the ferredoxin--NADP reductase type 2 family. In terms of assembly, homodimer. The cofactor is FAD.

It carries out the reaction 2 reduced [2Fe-2S]-[ferredoxin] + NADP(+) + H(+) = 2 oxidized [2Fe-2S]-[ferredoxin] + NADPH. This chain is Ferredoxin--NADP reductase, found in Streptococcus mutans serotype c (strain ATCC 700610 / UA159).